The sequence spans 482 residues: Bile acid receptor (482 aa).

Lysine 132 is covalently cross-linked (Glycyl lysine isopeptide (Lys-Gly) (interchain with G-Cter in SUMO1)). Positions 134–209 (DELCVVCGDR…MGMLAECLLT (76 aa)) form a DNA-binding region, nuclear receptor. An NR C4-type zinc finger spans residues 137–157 (CVVCGDRASGYHYNALTCEGC). 2 positions are modified to phosphoserine; by PKC/PRKCA: serine 145 and serine 164. N6-acetyllysine; by EP300 is present on lysine 167. The segment at 173 to 197 (CKNGGNCVMDMYMRRKCQECRLRKC) adopts an NR C4-type zinc-finger fold. Position 216 is an N6-methyllysine; by SETD7 (lysine 216). Residue lysine 223 is modified to N6-acetyllysine; by EP300. Over residues 229–240 (AIHEDSEGRDLR) the composition is skewed to basic and acidic residues. The tract at residues 229–253 (AIHEDSEGRDLRQVTSTTKSCREKT) is disordered. The region spanning 258–482 (DQQNLLHYIM…PLLCEIWDVQ (225 aa)) is the NR LBD domain. Residue lysine 285 forms a Glycyl lysine isopeptide (Lys-Gly) (interchain with G-Cter in SUMO1) linkage. Chenodeoxycholate is bound by residues arginine 341, tyrosine 371, and tyrosine 379. The residue at position 452 (threonine 452) is a Phosphothreonine; by PKC/PRKCZ. Histidine 457 lines the chenodeoxycholate pocket.

The protein belongs to the nuclear hormone receptor family. NR1 subfamily. As to quaternary structure, heterodimer with RXRA; the heterodimerization enhances the binding affinity for LXXLL motifs from coactivators. Binds DNA predominantly as a heterodimer with RXRA. After activation by agonist binding interacts with coactivators. Interacts with NCOA1, NCOA2, PPARGC1A, CARM1, SETD7, PRMT1, GPS2, SMARCA4 and MED1, EP300 and SMARCD1. Interacts with XRCC5 and XRCC6; decreasing NR1H4/FXR transactivation activity towards ABCB11/BSEP. Interacts with PAGR1 AND NCOA6; indicative for an association with an MLL2/MLL3 complex (ASCOM). Post-translationally, acetylated by EP300. Lys-223 as is the major acetylation site for EP300; the dynamicly regulated acetylation inhibits heterodimerization with RXRA and transactivation activity. Deacetylated by SIRT1. In terms of processing, methylation may increase transactivation of target genes. Phosphorylation by PKC/PRKCA increases transactivation activity by promoting association with PPARGC1A. Post-translationally, sumoylated upon ligand binding.

The protein resides in the nucleus. In terms of biological role, ligand-activated transcription factor. Receptor for bile acids (BAs) such as chenodeoxycholic acid (CDCA), lithocholic acid, deoxycholic acid (DCA) and allocholic acid (ACA). Plays a essential role in BA homeostasis through the regulation of genes involved in BA synthesis, conjugation and enterohepatic circulation. Also regulates lipid and glucose homeostasis and is involved innate immune response. The FXR-RXR heterodimer binds predominantly to farnesoid X receptor response elements (FXREs) containing two inverted repeats of the consensus sequence 5'-AGGTCA-3' in which the monomers are spaced by 1 nucleotide (IR-1) but also to tandem repeat DR1 sites with lower affinity, and can be activated by either FXR or RXR-specific ligands. It is proposed that monomeric nuclear receptors such as NR5A2/LRH-1 bound to coregulatory nuclear responsive element (NRE) halfsites located in close proximity to FXREs modulate transcriptional activity. In the liver activates transcription of the corepressor NR0B2 thereby indirectly inhibiting CYP7A1 and CYP8B1 (involved in BA synthesis) implicating at least in part histone demethylase KDM1A resulting in epigenomic repression, and SLC10A1/NTCP (involved in hepatic uptake of conjugated BAs). Activates transcription of the repressor MAFG (involved in regulation of BA synthesis). Activates transcription of SLC27A5/BACS and BAAT (involved in BA conjugation), ABCB11/BSEP (involved in bile salt export) by directly recruiting histone methyltransferase CARM1, and ABCC2/MRP2 (involved in secretion of conjugated BAs) and ABCB4 (involved in secretion of phosphatidylcholine in the small intestine). Activates transcription of SLC27A5/BACS and BAAT (involved in BA conjugation), ABCB11/BSEP (involved in bile salt export) by directly recruiting histone methyltransferase CARM1, and ABCC2/MRP2 (involved in secretion of conjugated BAs) and ABCB4 (involved in secretion of phosphatidylcholine in the small intestine). In the intestine activates FGF19 expression and secretion leading to hepatic CYP7A1 repression. The function also involves the coordinated induction of hepatic KLB/beta-klotho expression. Regulates transcription of liver UGT2B4 and SULT2A1 involved in BA detoxification; binding to the UGT2B4 promoter seems to imply a monomeric transactivation independent of RXRA. Modulates lipid homeostasis by activating liver NR0B2/SHP-mediated repression of SREBF1 (involved in de novo lipogenesis), expression of PLTP (involved in HDL formation), SCARB1 (involved in HDL hepatic uptake), APOE, APOC1, APOC4, PPARA (involved in beta-oxidation of fatty acids), VLDLR and SDC1 (involved in the hepatic uptake of LDL and IDL remnants), and inhibiting expression of MTTP (involved in VLDL assembly). Increases expression of APOC2 (promoting lipoprotein lipase activity implicated in triglyceride clearance). Transrepresses APOA1 involving a monomeric competition with NR2A1 for binding to a DR1 element. Also reduces triglyceride clearance by inhibiting expression of ANGPTL3 and APOC3 (both involved in inhibition of lipoprotein lipase). Involved in glucose homeostasis by modulating hepatic gluconeogenesis through activation of NR0B2/SHP-mediated repression of respective genes. Modulates glycogen synthesis (inducing phosphorylation of glycogen synthase kinase-3). Modulates glucose-stimulated insulin secretion and is involved in insulin resistance. Involved in intestinal innate immunity. Plays a role in protecting the distal small intestine against bacterial overgrowth and preservation of the epithelial barrier. Down-regulates inflammatory cytokine expression in several types of immune cells including macrophages and mononuclear cells. Mediates trans-repression of TLR4-induced cytokine expression; the function seems to require its sumoylation and prevents N-CoR nuclear receptor corepressor clearance from target genes such as IL1B and NOS2. Involved in the TLR9-mediated protective mechanism in intestinal inflammation. Plays an anti-inflammatory role in liver inflammation; proposed to inhibit pro-inflammatory (but not antiapoptotic) NF-kappa-B signaling. The protein is Bile acid receptor (NR1H4) of Bos taurus (Bovine).